The chain runs to 572 residues: Arginine--tRNA ligase (572 aa).

The 'HIGH' region motif lies at 122 to 132; that stretch reads PNLAKEMHVGH.

Belongs to the class-I aminoacyl-tRNA synthetase family. As to quaternary structure, monomer.

Its subcellular location is the cytoplasm. It catalyses the reaction tRNA(Arg) + L-arginine + ATP = L-arginyl-tRNA(Arg) + AMP + diphosphate. The chain is Arginine--tRNA ligase from Neisseria gonorrhoeae (strain NCCP11945).